The following is a 332-amino-acid chain: 5-dehydro-2-deoxygluconokinase 1 (332 aa).

It belongs to the carbohydrate kinase PfkB family.

It catalyses the reaction 5-dehydro-2-deoxy-D-gluconate + ATP = 6-phospho-5-dehydro-2-deoxy-D-gluconate + ADP + H(+). Its pathway is polyol metabolism; myo-inositol degradation into acetyl-CoA; acetyl-CoA from myo-inositol: step 5/7. Functionally, catalyzes the phosphorylation of 5-dehydro-2-deoxy-D-gluconate (2-deoxy-5-keto-D-gluconate or DKG) to 6-phospho-5-dehydro-2-deoxy-D-gluconate (DKGP). This chain is 5-dehydro-2-deoxygluconokinase 1, found in Bacillus cereus (strain ZK / E33L).